A 497-amino-acid polypeptide reads, in one-letter code: Putative diacyglycerol O-acyltransferase MT3584 (497 aa).

His-143 (proton acceptor) is an active-site residue.

It belongs to the long-chain O-acyltransferase family.

The catalysed reaction is an acyl-CoA + a 1,2-diacyl-sn-glycerol = a triacyl-sn-glycerol + CoA. It participates in glycerolipid metabolism; triacylglycerol biosynthesis. The polypeptide is Putative diacyglycerol O-acyltransferase MT3584 (Mycobacterium tuberculosis (strain CDC 1551 / Oshkosh)).